Consider the following 521-residue polypeptide: Alkyl hydroperoxide reductase subunit F (521 aa).

213 to 228 (DVLVVGGGPAGAAAAI) is an FAD binding site. Cys-344 and Cys-347 are oxidised to a cystine. 356–370 (RVAVIGGGNSGVEAA) lines the NAD(+) pocket. FAD is bound at residue 477–487 (TSLPGIFAAGD).

It belongs to the class-II pyridine nucleotide-disulfide oxidoreductase family. Homodimer. Requires FAD as cofactor.

Its function is as follows. Serves to protect the cell against DNA damage by alkyl hydroperoxides. It can use either NADH or NADPH as electron donor for direct reduction of redox dyes or of alkyl hydroperoxides when combined with the AhpC protein. In Pseudomonas aeruginosa (strain ATCC 15692 / DSM 22644 / CIP 104116 / JCM 14847 / LMG 12228 / 1C / PRS 101 / PAO1), this protein is Alkyl hydroperoxide reductase subunit F (ahpF).